The sequence spans 136 residues: ATP synthase epsilon chain (136 aa).

Belongs to the ATPase epsilon chain family. As to quaternary structure, F-type ATPases have 2 components, CF(1) - the catalytic core - and CF(0) - the membrane proton channel. CF(1) has five subunits: alpha(3), beta(3), gamma(1), delta(1), epsilon(1). CF(0) has three main subunits: a, b and c.

It is found in the cell membrane. Its function is as follows. Produces ATP from ADP in the presence of a proton gradient across the membrane. In Ureaplasma parvum serovar 3 (strain ATCC 27815 / 27 / NCTC 11736), this protein is ATP synthase epsilon chain.